A 993-amino-acid chain; its full sequence is MGSGRVPGLCLLLLLVHARAAQHGKAAQDVDECVEGTDNCHIDAICQNTPRSYKCICKSGYTGDGKHCKDVDECEREDNAGCVHDCVNIPGNYRCTCYDGFHLAHDGHNCLDVDECAEGNGGCQQSCVNMMGSYECHCRDGFFLSDNQHTCIQRPEEGMNCMNKNHGCAHICRETPKGGIACECRPGFELTKNQRDCKLTCNYGNGGCQHTCDDTEQGPRCGCHVKFVLHTDGKTCIETCAVNNGGCDSKCHDAATGVHCSCPVGFMLQPDRKTCKDIDECRLNNGGCDHICRNTVGSFECSCKKGYKLLINERSCQDIDECSFDRTCDHMCVNTPGSFQCLCHRGYLLYGVTHCGDVDECSINKGGCRFGCINTPGSYQCTCPAGQGRLHWNGKDCTEPVKCQSSLGASKAMLSCNRSGKKDTCALTCPSRARFLPESENGFTVSCGTPSPKAAPARVIHSGNSTVSSSCHEAAVLPVKQRASFKIKDAKCRLHLRNKGKAEEASRILGPGSVPCSDCLVTFIHLKCDSSRKGKGRRARTPPGKEVTRLTLELEAEVRAEETTAGCGLPCLRQRMERRLKGSLKMLRKSINQDRFLLRLAGLDYELAHKPGLGAGDRAELVEVCRPGQHRAGTKCVSCPQGTYYHGQTEQCVPCPAGTFQEREGQLSCDLCPGSDAHGPLGATNVTTCAGQCPPGHHSGDGFKPCQPCPRGTYQPEAGRTLCFPCGGGLTTKHEGAVSFQDCDTKVQCSPGHYYNTSIHRCIRCAVGSYQPDFRQNFCTRCPGNTSTDFDGSTSVAQCKNRQCGGELGEFTGYIESPNYPGNYPAGVECVWNINPPPKRKILIVVPEIFLPSEDECGDVLVMRKNSSPSSITTYETCQTYERPIAFTARSRKLWINFKTSEANSARGFQIPYVTYDEDYEQLVEDIVRDGRLYASENHQEILKDKKLIKAFFEVLAHPQNYFKYTEKHKEMLPKSFIKLLRSKVSSFLRPYK.

The signal sequence occupies residues Met-1 to Ala-20. The EGF-like 1; calcium-binding domain occupies Asp-29 to Lys-69. 26 cysteine pairs are disulfide-bonded: Cys-33-Cys-46, Cys-40-Cys-55, Cys-57-Cys-68, Cys-74-Cys-86, Cys-82-Cys-95, Cys-97-Cys-110, Cys-116-Cys-127, Cys-123-Cys-136, Cys-161-Cys-172, Cys-168-Cys-182, Cys-184-Cys-197, Cys-201-Cys-212, Cys-208-Cys-221, Cys-223-Cys-236, Cys-240-Cys-251, Cys-247-Cys-260, Cys-262-Cys-275, Cys-281-Cys-292, Cys-288-Cys-301, Cys-303-Cys-316, Cys-322-Cys-332, Cys-328-Cys-341, Cys-343-Cys-355, Cys-361-Cys-372, Cys-368-Cys-381, and Cys-383-Cys-397. Residues Asp-70 to Leu-111 form the EGF-like 2; calcium-binding domain. The 37-residue stretch at Asp-112–Gln-148 folds into the EGF-like 3; calcium-binding domain. 3 consecutive EGF-like domains span residues Glu-157–Lys-198, Leu-199–Ile-237, and Glu-238–Lys-276. The 41-residue stretch at Asp-277–Gln-317 folds into the EGF-like 7; calcium-binding domain. The region spanning Asp-318–Gly-356 is the EGF-like 8; calcium-binding domain. The 42-residue stretch at Asp-357–Thr-398 folds into the EGF-like 9; calcium-binding domain. 5 N-linked (GlcNAc...) asparagine glycosylation sites follow: Asn-417, Asn-464, Asn-685, Asn-756, and Asn-785. Disulfide bonds link Cys-804–Cys-830 and Cys-857–Cys-878. The region spanning Cys-804–Tyr-916 is the CUB domain.

Forms homooligomers. Forms heterooligomers with SCUBE1 and SCUBE2. Interacts with TGFBR2 through the CUB domain; this interaction does not affect TGFB1-binding to TGFBR2. Interacts with BMP2, BMP4 and BMP7; the interaction is mediated by the CUB domain. Interacts with BMPR1A, BMPR1B and BMPR2; the interaction with BMPR1A and BMPR1B is BMP2- and BMP4-dependent. N-glycosylated. Post-translationally, proteolytic cleavage produces a CUB-containing C-terminal fragment that retains the ability to bind to TGFBR2. This reaction is catalyzed in vitro by MMP2 and, to a lesser extent, by MMP9. In terms of tissue distribution, highly expressed in femur and humerus with little or no expression in non-bone tissues.

It localises to the secreted. Its subcellular location is the cell surface. Is a positive regulator of the BMP signaling pathway, required for proper chondrogenesis, osteogenesis and skeletal development. It acts as a coreceptor for BMP ligands, particularly BMP2 and BMP4, facilitating their interactions with BMP type I receptors. It is required for ligand-induced recruitment of BMP receptors to lipid rafts. Binds to TGFBR2 and activates TGFB signaling. The protein is Signal peptide, CUB and EGF-like domain-containing protein 3 of Mus musculus (Mouse).